A 65-amino-acid polypeptide reads, in one-letter code: Large ribosomal subunit protein uL29 (65 aa).

It belongs to the universal ribosomal protein uL29 family.

The protein is Large ribosomal subunit protein uL29 of Mycoplasmopsis pulmonis (strain UAB CTIP) (Mycoplasma pulmonis).